Here is a 163-residue protein sequence, read N- to C-terminus: MAKDSSFDIVSKVELPEVTNAINTALKEIQNRYDFKGSKSDIKLEKEVLVLTSDDEFKLEQVKDVLISKLVKRNVPIKNLDYGKVEAAAGNTVRQRATLQQGIDKDNAKKINNIIKEMKLKVKTQVQDDQVRVTAKSRDDLQAVIAAVRSADLPIDVQFINYR.

Belongs to the YajQ family.

Nucleotide-binding protein. The polypeptide is Nucleotide-binding protein BA_1166 (Bacillus anthracis).